Reading from the N-terminus, the 2669-residue chain is Nucleosome-remodeling factor subunit NURF301 (2669 aa).

Over residues 1 to 12 (MSGRGSRKRGRP) the composition is skewed to basic residues. Positions 1-121 (MSGRGSRKRG…EEDKSDNEDD (121 aa)) are required for function in nucleosome sliding. The segment at 1-125 (MSGRGSRKRG…SDNEDDMLLT (125 aa)) is disordered. Positions 6–18 (SRKRGRPPKTPNE) form a DNA-binding region, a.T hook. A compositionally biased stretch (polar residues) spans 38–56 (GKSQPSTPSASRGISPQSD). S40, S52, S55, S59, and S62 each carry phosphoserine. Residues 66-82 (HTNRSRGSAAKRGRGRK) show a composition bias toward basic residues. Positions 109 to 125 (GDSEEDKSDNEDDMLLT) are enriched in acidic residues. The DDT domain maps to 188–248 (NTHVLRALSI…LKAILREEDA (61 aa)). A PHD-type 1 zinc finger spans residues 339–386 (DDHCRVCHRLGDLLCCETCPAVYHLECVDPPMNDVPTEDWQCGLCRSH). Residues 460 to 515 (RLHSQITERRDEIERQMKLTETLTNEHKHTKRSVIEIEQEAKNELLEKEVLDEDEK) adopt a coiled-coil conformation. The tract at residues 505–538 (LEKEVLDEDEKDGDAKSESQSIEGTKKQEECKMV) is disordered. The span at 528–537 (GTKKQEECKM) shows a compositional bias: basic and acidic residues. Residues 688 to 720 (LQRITSAEREERKKLEKREKRERDDEEERNRLA) are a coiled coil. Disordered regions lie at residues 1026–1048 (EGKRESTQVAVDDSEEGKPAESE), 1135–1159 (TGLNSGNAEDVDMTPGWRRKRNQKS), and 1406–1425 (RSGLRKRKRAESPQPTEPQI). Residue S1417 is modified to Phosphoserine. Residue T1527 is modified to Phosphothreonine. Residues 1559–1590 (SRTGGANTAAAAASPTVGGSTSTQSNPSTSTP) are compositionally biased toward low complexity. 3 disordered regions span residues 1559 to 1596 (SRTGGANTAAAAASPTVGGSTSTQSNPSTSTPHKVQII), 2181 to 2203 (INNGDDQENSKCAETENSNITTN), and 2283 to 2307 (TNEWETCSRGSVNEEALTPSRQTDD). The span at 2283 to 2293 (TNEWETCSRGS) shows a compositional bias: polar residues. Residues 2338–2373 (KNDEVAELGEQKQSQLERHKELLKKNILRKRSLLER) adopt a coiled-coil conformation. The segment at 2382-2432 (DVKTKVQRHVRPLSNASPDEQSENERSGEPNLDFKRTEVQNPRHGAGRPKK) is disordered. Phosphoserine occurs at positions 2395, 2398, and 2403. Positions 2404–2419 (ENERSGEPNLDFKRTE) are enriched in basic and acidic residues. Residues 2481 to 2546 (EFICIDCKRA…EYVCPECQRK (66 aa)) form a PHD-type 2 zinc finger. The Bromo domain maps to 2556–2660 (KLTSNDVEEL…SYFVQKIKNF (105 aa)).

This sequence belongs to the BPTF family. Component of the NURF complex composed of Caf1-55, E(bx), Nurf-38 and Iswi. Interacts with Trl. Interacts with histone H3-K4Me3.

It localises to the nucleus. In terms of biological role, histone-binding component of NURF (nucleosome remodeling factor), a complex which catalyzes ATP-dependent nucleosome sliding and facilitates transcription of chromatin. Specifically recognizes H3 tails trimethylated on 'Lys-4' (H3K4me3), which mark transcription start sites of virtually all active genes. Required for homeotic gene expression, proper larval blood cell development, normal male X chromosome morphology, ecdysteroid signaling and metamorphosis. This chain is Nucleosome-remodeling factor subunit NURF301 (E(bx)), found in Drosophila melanogaster (Fruit fly).